Consider the following 127-residue polypeptide: Acetylcholine receptor subunit alpha (127 aa).

Residues 1–127 (ADGIFAIDQF…YFIVNVIIPC (127 aa)) lie on the Extracellular side of the membrane. The cysteines at positions 33 and 47 are disulfide-linked. N-linked (GlcNAc...) asparagine glycans are attached at residues asparagine 46 and asparagine 94. Cysteines 97 and 98 form a disulfide.

It belongs to the ligand-gated ion channel (TC 1.A.9) family. Acetylcholine receptor (TC 1.A.9.1) subfamily. Alpha-1/CHRNA1 sub-subfamily. As to quaternary structure, one of the alpha chains that assemble within the acetylcholine receptor, a pentamer of two alpha chains, a beta, a delta, and a gamma or epsilon chains.

The protein localises to the postsynaptic cell membrane. It localises to the cell membrane. It carries out the reaction K(+)(in) = K(+)(out). It catalyses the reaction Na(+)(in) = Na(+)(out). In terms of biological role, upon acetylcholine binding, the AChR responds by an extensive change in conformation that affects all subunits and leads to opening of an ion-conducting channel across the plasma membrane. Does not bind alpha-bungarotoxin. This Natrix tessellata (Dice snake) protein is Acetylcholine receptor subunit alpha (CHRNA1).